The chain runs to 430 residues: Transcobalamin-2 (430 aa).

Residues 1 to 18 form the signal peptide; that stretch reads MELLKALLLLSGVFGALA. 3 cysteine pairs are disulfide-bonded: cysteine 21-cysteine 270, cysteine 116-cysteine 312, and cysteine 165-cysteine 208. Cob(II)alamin is bound by residues 152–156, histidine 193, 193–197, asparagine 245, serine 248, glutamine 294, and 398–400; these read TNYYQ, HVSVD, and WQL.

Belongs to the eukaryotic cobalamin transport proteins family. Interacts with CD320 (via LDL-receptor class A domains).

Its subcellular location is the secreted. Its function is as follows. Primary vitamin B12-binding and transport protein. Delivers cobalamin to cells. This Mus musculus (Mouse) protein is Transcobalamin-2 (Tcn2).